A 433-amino-acid polypeptide reads, in one-letter code: Chaperone SurA (433 aa).

An N-terminal signal peptide occupies residues 1–28 (MTAITRITLTGALLAAALLLAALQPARA). 2 consecutive PpiC domains span residues 174–277 (NQEY…KLMD) and 286–386 (VTET…QVTD).

The protein resides in the periplasm. It carries out the reaction [protein]-peptidylproline (omega=180) = [protein]-peptidylproline (omega=0). Its function is as follows. Chaperone involved in the correct folding and assembly of outer membrane proteins. Recognizes specific patterns of aromatic residues and the orientation of their side chains, which are found more frequently in integral outer membrane proteins. May act in both early periplasmic and late outer membrane-associated steps of protein maturation. This is Chaperone SurA from Alkalilimnicola ehrlichii (strain ATCC BAA-1101 / DSM 17681 / MLHE-1).